Reading from the N-terminus, the 451-residue chain is Ribulose bisphosphate carboxylase large chain (451 aa).

N6,N6,N6-trimethyllysine is present on lysine 5. Residues asparagine 114 and threonine 164 each coordinate substrate. Lysine 166 acts as the Proton acceptor in catalysis. Residue lysine 168 participates in substrate binding. Mg(2+) contacts are provided by lysine 192, aspartate 194, and glutamate 195. Lysine 192 bears the N6-carboxylysine mark. Histidine 285 serves as the catalytic Proton acceptor. 3 residues coordinate substrate: arginine 286, histidine 318, and serine 370.

The protein belongs to the RuBisCO large chain family. Type I subfamily. Heterohexadecamer of 8 large chains and 8 small chains; disulfide-linked. The disulfide link is formed within the large subunit homodimers. Mg(2+) is required as a cofactor. The disulfide bond which can form in the large chain dimeric partners within the hexadecamer appears to be associated with oxidative stress and protein turnover.

It is found in the plastid. The protein localises to the chloroplast. The catalysed reaction is 2 (2R)-3-phosphoglycerate + 2 H(+) = D-ribulose 1,5-bisphosphate + CO2 + H2O. It carries out the reaction D-ribulose 1,5-bisphosphate + O2 = 2-phosphoglycolate + (2R)-3-phosphoglycerate + 2 H(+). RuBisCO catalyzes two reactions: the carboxylation of D-ribulose 1,5-bisphosphate, the primary event in carbon dioxide fixation, as well as the oxidative fragmentation of the pentose substrate in the photorespiration process. Both reactions occur simultaneously and in competition at the same active site. This Aristea glauca protein is Ribulose bisphosphate carboxylase large chain.